The following is a 446-amino-acid chain: Probable glycine dehydrogenase (decarboxylating) subunit 1 (446 aa).

It belongs to the GcvP family. N-terminal subunit subfamily. As to quaternary structure, the glycine cleavage system is composed of four proteins: P, T, L and H. In this organism, the P 'protein' is a heterodimer of two subunits.

The enzyme catalyses N(6)-[(R)-lipoyl]-L-lysyl-[glycine-cleavage complex H protein] + glycine + H(+) = N(6)-[(R)-S(8)-aminomethyldihydrolipoyl]-L-lysyl-[glycine-cleavage complex H protein] + CO2. In terms of biological role, the glycine cleavage system catalyzes the degradation of glycine. The P protein binds the alpha-amino group of glycine through its pyridoxal phosphate cofactor; CO(2) is released and the remaining methylamine moiety is then transferred to the lipoamide cofactor of the H protein. This is Probable glycine dehydrogenase (decarboxylating) subunit 1 from Methylocella silvestris (strain DSM 15510 / CIP 108128 / LMG 27833 / NCIMB 13906 / BL2).